Here is a 70-residue protein sequence, read N- to C-terminus: Large ribosomal subunit protein bL31 (70 aa).

Residues C16, C18, C37, and C40 each coordinate Zn(2+).

It belongs to the bacterial ribosomal protein bL31 family. Type A subfamily. In terms of assembly, part of the 50S ribosomal subunit. It depends on Zn(2+) as a cofactor.

Functionally, binds the 23S rRNA. This chain is Large ribosomal subunit protein bL31, found in Haemophilus influenzae (strain PittEE).